The following is a 214-amino-acid chain: uncharacterized protein (214 aa).

URF2 product may be involved in the transfer of iron-sulfur clusters to the NADH dehydrogenase complex. It may also be required for the assembly of the NADH dehydrogenase complex. This is an uncharacterized protein from Paracoccus denitrificans.